The primary structure comprises 593 residues: NADH-quinone oxidoreductase subunit C/D (593 aa).

The interval 1 to 184 is NADH dehydrogenase I subunit C; the sequence is MTADSVLSIP…DPYSLSAAKQ (184 aa). The segment at 208–593 is NADH dehydrogenase I subunit D; it reads DFMFLNLGPN…IDFVMADVDR (386 aa).

It in the N-terminal section; belongs to the complex I 30 kDa subunit family. The protein in the C-terminal section; belongs to the complex I 49 kDa subunit family. In terms of assembly, NDH-1 is composed of 13 different subunits. Subunits NuoB, CD, E, F, and G constitute the peripheral sector of the complex.

It is found in the cell inner membrane. The catalysed reaction is a quinone + NADH + 5 H(+)(in) = a quinol + NAD(+) + 4 H(+)(out). NDH-1 shuttles electrons from NADH, via FMN and iron-sulfur (Fe-S) centers, to quinones in the respiratory chain. The immediate electron acceptor for the enzyme in this species is believed to be ubiquinone. Couples the redox reaction to proton translocation (for every two electrons transferred, four hydrogen ions are translocated across the cytoplasmic membrane), and thus conserves the redox energy in a proton gradient. In Azotobacter vinelandii (strain DJ / ATCC BAA-1303), this protein is NADH-quinone oxidoreductase subunit C/D.